The chain runs to 232 residues: Phosphatidylserine decarboxylase proenzyme (232 aa).

S190 acts as the Schiff-base intermediate with substrate; via pyruvic acid in catalysis. S190 carries the post-translational modification Pyruvic acid (Ser); by autocatalysis.

Belongs to the phosphatidylserine decarboxylase family. PSD-A subfamily. As to quaternary structure, heterodimer of a large membrane-associated beta subunit and a small pyruvoyl-containing alpha subunit. The cofactor is pyruvate. In terms of processing, is synthesized initially as an inactive proenzyme. Formation of the active enzyme involves a self-maturation process in which the active site pyruvoyl group is generated from an internal serine residue via an autocatalytic post-translational modification. Two non-identical subunits are generated from the proenzyme in this reaction, and the pyruvate is formed at the N-terminus of the alpha chain, which is derived from the carboxyl end of the proenzyme. The post-translation cleavage follows an unusual pathway, termed non-hydrolytic serinolysis, in which the side chain hydroxyl group of the serine supplies its oxygen atom to form the C-terminus of the beta chain, while the remainder of the serine residue undergoes an oxidative deamination to produce ammonia and the pyruvoyl prosthetic group on the alpha chain.

Its subcellular location is the cell membrane. It carries out the reaction a 1,2-diacyl-sn-glycero-3-phospho-L-serine + H(+) = a 1,2-diacyl-sn-glycero-3-phosphoethanolamine + CO2. Its pathway is phospholipid metabolism; phosphatidylethanolamine biosynthesis; phosphatidylethanolamine from CDP-diacylglycerol: step 2/2. Functionally, catalyzes the formation of phosphatidylethanolamine (PtdEtn) from phosphatidylserine (PtdSer). The protein is Phosphatidylserine decarboxylase proenzyme of Afipia carboxidovorans (strain ATCC 49405 / DSM 1227 / KCTC 32145 / OM5) (Oligotropha carboxidovorans).